The primary structure comprises 216 residues: Ceramide-1-phosphate transfer protein (216 aa).

Residues aspartate 56, lysine 60, arginine 108, arginine 112, and histidine 152 each coordinate an N-acylsphingoid base 1-phosphate.

This sequence belongs to the GLTP family.

The protein resides in the cytoplasm. The protein localises to the cytosol. Its subcellular location is the golgi apparatus. It is found in the trans-Golgi network membrane. It localises to the cell membrane. The protein resides in the endosome membrane. The protein localises to the nucleus outer membrane. The catalysed reaction is N-(hexadecanoyl)-sphing-4-enine-1-phosphate(in) = N-(hexadecanoyl)-sphing-4-enine-1-phosphate(out). It carries out the reaction N-(9Z-octadecenoyl)-sphing-4-enine-1-phosphate(in) = N-(9Z-octadecenoyl)-sphing-4-enine-1-phosphate(out). In terms of biological role, mediates the intracellular transfer of ceramide-1-phosphate (C1P) between organelle membranes and the cell membrane. Required for normal structure of the Golgi stacks. Can bind phosphoceramides with a variety of aliphatic chains, but has a preference for lipids with saturated C16:0 or monounsaturated C18:1 aliphatic chains, and is inefficient with phosphoceramides containing lignoceryl (C24:0). Plays a role in the regulation of the cellular levels of ceramide-1-phosphate, and thereby contributes to the regulation of phospholipase PLA2G4A activity and the release of arachidonic acid. Has no activity with galactosylceramide, lactosylceramide, sphingomyelin, phosphatidylcholine, phosphatidic acid and ceramide. C1P transfer is stimulated by phosphatidylserine in C1P source vesicles. Regulates autophagy, inflammasome mediated IL1B and IL18 processing, and pyroptosis, but not apoptosis. In Rattus norvegicus (Rat), this protein is Ceramide-1-phosphate transfer protein (Cptp).